The chain runs to 155 residues: Large ribosomal subunit protein eL24 (155 aa).

Residues Lys-97–Lys-129 are compositionally biased toward basic and acidic residues. The segment at Lys-97–Arg-155 is disordered. The span at Thr-133–Gln-142 shows a compositional bias: polar residues.

This sequence belongs to the eukaryotic ribosomal protein eL24 family.

The polypeptide is Large ribosomal subunit protein eL24 (RPL24) (Eremothecium gossypii (strain ATCC 10895 / CBS 109.51 / FGSC 9923 / NRRL Y-1056) (Yeast)).